The following is a 165-amino-acid chain: Nucleotide-binding protein NATL1_05371 (165 aa).

It belongs to the YajQ family.

Nucleotide-binding protein. The chain is Nucleotide-binding protein NATL1_05371 from Prochlorococcus marinus (strain NATL1A).